The chain runs to 147 residues: Large ribosomal subunit protein uL13 (147 aa).

This sequence belongs to the universal ribosomal protein uL13 family. In terms of assembly, part of the 50S ribosomal subunit.

Functionally, this protein is one of the early assembly proteins of the 50S ribosomal subunit, although it is not seen to bind rRNA by itself. It is important during the early stages of 50S assembly. This is Large ribosomal subunit protein uL13 from Streptomyces griseus subsp. griseus (strain JCM 4626 / CBS 651.72 / NBRC 13350 / KCC S-0626 / ISP 5235).